Consider the following 377-residue polypeptide: Nitric oxide reductase FlRd-NAD(+) reductase (377 aa).

This sequence belongs to the FAD-dependent oxidoreductase family. FAD is required as a cofactor.

The protein resides in the cytoplasm. The enzyme catalyses 2 reduced [nitric oxide reductase rubredoxin domain] + NAD(+) + H(+) = 2 oxidized [nitric oxide reductase rubredoxin domain] + NADH. It functions in the pathway nitrogen metabolism; nitric oxide reduction. Its function is as follows. One of at least two accessory proteins for anaerobic nitric oxide (NO) reductase. Reduces the rubredoxin moiety of NO reductase. In Escherichia coli O7:K1 (strain IAI39 / ExPEC), this protein is Nitric oxide reductase FlRd-NAD(+) reductase.